Reading from the N-terminus, the 129-residue chain is Protein Turandot C (129 aa).

The N-terminal stretch at 1–21 is a signal peptide; that stretch reads MNASISLLCLALLLISPFCLG.

Belongs to the Turandot family.

Its subcellular location is the secreted. A humoral factor that may play a role in stress tolerance. This chain is Protein Turandot C, found in Drosophila melanogaster (Fruit fly).